Consider the following 447-residue polypeptide: Hemopexin (447 aa).

The first 18 residues, 1–18, serve as a signal peptide directing secretion; it reads MRLIQALSLCLALSLSLA. Residues 20-44 form a disordered region; sequence PPQHKEDHSHKGKPGGEGHKHELHH. Residues 22–44 show a composition bias toward basic and acidic residues; the sequence is QHKEDHSHKGKPGGEGHKHELHH. 8 Hemopexin repeats span residues 53 to 93, 99 to 151, 152 to 197, 198 to 243, 262 to 304, 305 to 351, 352 to 395, and 396 to 441; these read GIEF…FPEL, LGHV…FPGI, PDHL…FKSM, PNCT…FMRC, RVHL…FKEL, HSEV…VLGI, EGPV…TITQ, and FKRI…VSQQ. A glycan (N-linked (GlcNAc...) asparagine) is linked at Asn-87. Asn-168 and Asn-199 each carry an N-linked (GlcNAc...) asparagine glycan. His-293 provides a ligand contact to heme.

Belongs to the hemopexin family.

Its subcellular location is the secreted. Functionally, binds heme and transports it to the liver for breakdown and iron recovery, after which the free hemopexin returns to the circulation. The protein is Hemopexin of Danio rerio (Zebrafish).